A 209-amino-acid chain; its full sequence is Ribosome maturation factor RimM (209 aa).

The 76-residue stretch at 103 to 178 (EGATYVSDLV…RIEMVLPQGM (76 aa)) folds into the PRC barrel domain. The disordered stretch occupies residues 184–209 (PLSKAEKERQKSEADETREAGERRKR). Positions 187-209 (KAEKERQKSEADETREAGERRKR) are enriched in basic and acidic residues.

It belongs to the RimM family. As to quaternary structure, binds ribosomal protein uS19.

It is found in the cytoplasm. Its function is as follows. An accessory protein needed during the final step in the assembly of 30S ribosomal subunit, possibly for assembly of the head region. Essential for efficient processing of 16S rRNA. May be needed both before and after RbfA during the maturation of 16S rRNA. It has affinity for free ribosomal 30S subunits but not for 70S ribosomes. In Koribacter versatilis (strain Ellin345), this protein is Ribosome maturation factor RimM.